We begin with the raw amino-acid sequence, 470 residues long: 3-isopropylmalate dehydratase large subunit (470 aa).

[4Fe-4S] cluster-binding residues include Cys348, Cys409, and Cys412.

This sequence belongs to the aconitase/IPM isomerase family. LeuC type 1 subfamily. In terms of assembly, heterodimer of LeuC and LeuD. Requires [4Fe-4S] cluster as cofactor.

The enzyme catalyses (2R,3S)-3-isopropylmalate = (2S)-2-isopropylmalate. The protein operates within amino-acid biosynthesis; L-leucine biosynthesis; L-leucine from 3-methyl-2-oxobutanoate: step 2/4. Catalyzes the isomerization between 2-isopropylmalate and 3-isopropylmalate, via the formation of 2-isopropylmaleate. The chain is 3-isopropylmalate dehydratase large subunit from Acidithiobacillus ferrooxidans (strain ATCC 23270 / DSM 14882 / CIP 104768 / NCIMB 8455) (Ferrobacillus ferrooxidans (strain ATCC 23270)).